Here is a 141-residue protein sequence, read N- to C-terminus: Large ribosomal subunit protein uL11 (141 aa).

This sequence belongs to the universal ribosomal protein uL11 family. In terms of assembly, part of the ribosomal stalk of the 50S ribosomal subunit. Interacts with L10 and the large rRNA to form the base of the stalk. L10 forms an elongated spine to which L12 dimers bind in a sequential fashion forming a multimeric L10(L12)X complex. Post-translationally, one or more lysine residues are methylated.

Its function is as follows. Forms part of the ribosomal stalk which helps the ribosome interact with GTP-bound translation factors. This Streptococcus sanguinis (strain SK36) protein is Large ribosomal subunit protein uL11.